Consider the following 333-residue polypeptide: L-lactate dehydrogenase A chain (333 aa).

The residue at position 2 (Ala-2) is an N-acetylalanine. NAD(+)-binding positions include 30–58 (GAVG…MEDK) and Arg-100. 3 residues coordinate substrate: Arg-107, Asn-139, and Arg-170. Asn-139 provides a ligand contact to NAD(+). Residue His-194 is the Proton acceptor of the active site. A substrate-binding site is contributed by Thr-249.

Belongs to the LDH/MDH superfamily. LDH family. As to quaternary structure, homotetramer.

It localises to the cytoplasm. The enzyme catalyses (S)-lactate + NAD(+) = pyruvate + NADH + H(+). It participates in fermentation; pyruvate fermentation to lactate; (S)-lactate from pyruvate: step 1/1. Its function is as follows. Interconverts simultaneously and stereospecifically pyruvate and lactate with concomitant interconversion of NADH and NAD(+). The sequence is that of L-lactate dehydrogenase A chain (ldha) from Squalus acanthias (Spiny dogfish).